The primary structure comprises 251 residues: Small ribosomal subunit protein uS2 (251 aa).

It belongs to the universal ribosomal protein uS2 family.

This is Small ribosomal subunit protein uS2 from Synechococcus sp. (strain ATCC 27144 / PCC 6301 / SAUG 1402/1) (Anacystis nidulans).